Here is a 283-residue protein sequence, read N- to C-terminus: Nucleotide-binding protein Hore_15880 (283 aa).

Residue 8-15 (GMSGAGKS) coordinates ATP. 57–60 (DIRG) contributes to the GTP binding site.

The protein belongs to the RapZ-like family.

In terms of biological role, displays ATPase and GTPase activities. In Halothermothrix orenii (strain H 168 / OCM 544 / DSM 9562), this protein is Nucleotide-binding protein Hore_15880.